The primary structure comprises 131 residues: Glycine cleavage system H protein (131 aa).

The Lipoyl-binding domain maps to 24-106; that stretch reads RVTVGISDHA…YGEGWMFVVE (83 aa). Lys-65 carries the post-translational modification N6-lipoyllysine.

Belongs to the GcvH family. As to quaternary structure, the glycine cleavage system is composed of four proteins: P, T, L and H. It depends on (R)-lipoate as a cofactor.

The glycine cleavage system catalyzes the degradation of glycine. The H protein shuttles the methylamine group of glycine from the P protein to the T protein. This chain is Glycine cleavage system H protein, found in Stenotrophomonas maltophilia (strain K279a).